Consider the following 662-residue polypeptide: Glutathione hydrolase 7 (662 aa).

At 1 to 106 the chain is on the cytoplasmic side; it reads MAAENEASQE…ASECSCRQDG (106 aa). 4 positions are modified to phosphoserine: serine 17, serine 72, serine 79, and serine 83. The segment at 26–90 is disordered; that stretch reads SFPRLPEDEP…DGSPLRETRK (65 aa). Over residues 72-83 the composition is skewed to low complexity; that stretch reads SSSSEMGSQDGS. The chain crosses the membrane as a helical; Signal-anchor for type II membrane protein span at residues 107–127; that stretch reads LTVIVTACLTFATGVTVALIM. Topologically, residues 128 to 662 are extracellular; that stretch reads QIYFGDPQIF…SPDAAGATIL (535 aa). N-linked (GlcNAc...) asparagine glycosylation is found at asparagine 198, asparagine 267, asparagine 283, asparagine 330, asparagine 353, asparagine 394, asparagine 452, asparagine 519, and asparagine 586.

This sequence belongs to the gamma-glutamyltransferase family. In terms of assembly, heterodimer composed of the light and heavy chains. The active site is located in the light chain. In terms of processing, cleaved by autocatalysis into a large and a small subunit and the autocatalytic cleavage is essential to the functional activation of the enzyme.

The protein resides in the membrane. The catalysed reaction is an N-terminal (5-L-glutamyl)-[peptide] + an alpha-amino acid = 5-L-glutamyl amino acid + an N-terminal L-alpha-aminoacyl-[peptide]. It carries out the reaction glutathione + H2O = L-cysteinylglycine + L-glutamate. It catalyses the reaction an S-substituted glutathione + H2O = an S-substituted L-cysteinylglycine + L-glutamate. It functions in the pathway sulfur metabolism; glutathione metabolism. Its function is as follows. Hydrolyzes and transfers gamma-glutamyl moieties from glutathione and other gamma-glutamyl compounds to acceptors. In Bos taurus (Bovine), this protein is Glutathione hydrolase 7.